Here is an 828-residue protein sequence, read N- to C-terminus: Periplasmic nitrate reductase (828 aa).

The tat-type signal signal peptide spans 1 to 31 (MKLSRRSFMKANAVAAAAAAAGLSVPGVARA). Residues 39-95 (IKWDKAPCRFCGTGCGVLVGTQQGRVVACQGDPDAPVNRGLNCIKGYFLPKIMYGKD) enclose the 4Fe-4S Mo/W bis-MGD-type domain. [4Fe-4S] cluster-binding residues include cysteine 46, cysteine 49, cysteine 53, and cysteine 81. Mo-bis(molybdopterin guanine dinucleotide) contacts are provided by residues lysine 83, glutamine 150, asparagine 175, cysteine 179, 212-219 (WGANMAEM), 243-247 (STYQH), 262-264 (QSD), methionine 372, glutamine 376, asparagine 482, 508-509 (SD), lysine 531, aspartate 558, and 718-727 (TGRVLEHWHT). Phenylalanine 794 is a substrate binding site. Residues asparagine 802 and lysine 819 each contribute to the Mo-bis(molybdopterin guanine dinucleotide) site.

This sequence belongs to the prokaryotic molybdopterin-containing oxidoreductase family. NasA/NapA/NarB subfamily. As to quaternary structure, component of the periplasmic nitrate reductase NapAB complex composed of NapA and NapB. [4Fe-4S] cluster serves as cofactor. The cofactor is Mo-bis(molybdopterin guanine dinucleotide). Predicted to be exported by the Tat system. The position of the signal peptide cleavage has not been experimentally proven.

The protein localises to the periplasm. The catalysed reaction is 2 Fe(II)-[cytochrome] + nitrate + 2 H(+) = 2 Fe(III)-[cytochrome] + nitrite + H2O. In terms of biological role, catalytic subunit of the periplasmic nitrate reductase complex NapAB. Receives electrons from NapB and catalyzes the reduction of nitrate to nitrite. This Escherichia coli O157:H7 (strain EC4115 / EHEC) protein is Periplasmic nitrate reductase.